The chain runs to 78 residues: Acyl carrier protein (78 aa).

The region spanning 1 to 76 (MALFEDIQAV…DVVKYIEDNK (76 aa)) is the Carrier domain. Position 36 is an O-(pantetheine 4'-phosphoryl)serine (Ser-36).

Belongs to the acyl carrier protein (ACP) family. Post-translationally, 4'-phosphopantetheine is transferred from CoA to a specific serine of apo-ACP by AcpS. This modification is essential for activity because fatty acids are bound in thioester linkage to the sulfhydryl of the prosthetic group.

Its subcellular location is the cytoplasm. The protein operates within lipid metabolism; fatty acid biosynthesis. Carrier of the growing fatty acid chain in fatty acid biosynthesis. This is Acyl carrier protein from Helicobacter pylori (strain G27).